The sequence spans 425 residues: Protein-glutamate methylesterase/protein-glutamine glutaminase (425 aa).

The region spanning 22–140 is the Response regulatory domain; that stretch reads RVMVVDDSVV…EVAAADIFRH (119 aa). Aspartate 73 is subject to 4-aspartylphosphate. Disordered stretches follow at residues 150-174 and 203-223; these read AAKR…SNAS and VQRE…RPQP. The 197-residue stretch at 221 to 417 folds into the CheB-type methylesterase domain; sequence PQPTLRSFSA…PLQQIAPKLV (197 aa). Catalysis depends on residues serine 241, histidine 269, and aspartate 365.

The protein belongs to the CheB family. In terms of processing, phosphorylated by CheA. Phosphorylation of the N-terminal regulatory domain activates the methylesterase activity.

The protein localises to the cytoplasm. The catalysed reaction is [protein]-L-glutamate 5-O-methyl ester + H2O = L-glutamyl-[protein] + methanol + H(+). The enzyme catalyses L-glutaminyl-[protein] + H2O = L-glutamyl-[protein] + NH4(+). Its function is as follows. Involved in chemotaxis. Part of a chemotaxis signal transduction system that modulates chemotaxis in response to various stimuli. Catalyzes the demethylation of specific methylglutamate residues introduced into the chemoreceptors (methyl-accepting chemotaxis proteins or MCP) by CheR. Also mediates the irreversible deamidation of specific glutamine residues to glutamic acid. The polypeptide is Protein-glutamate methylesterase/protein-glutamine glutaminase (Nitrobacter winogradskyi (strain ATCC 25391 / DSM 10237 / CIP 104748 / NCIMB 11846 / Nb-255)).